The sequence spans 172 residues: Adenine phosphoribosyltransferase (172 aa).

It belongs to the purine/pyrimidine phosphoribosyltransferase family. As to quaternary structure, homodimer.

The protein localises to the cytoplasm. It catalyses the reaction AMP + diphosphate = 5-phospho-alpha-D-ribose 1-diphosphate + adenine. It functions in the pathway purine metabolism; AMP biosynthesis via salvage pathway; AMP from adenine: step 1/1. In terms of biological role, catalyzes a salvage reaction resulting in the formation of AMP, that is energically less costly than de novo synthesis. In Clostridium botulinum (strain Eklund 17B / Type B), this protein is Adenine phosphoribosyltransferase.